The primary structure comprises 348 residues: Anthranilate phosphoribosyltransferase (348 aa).

Residues Gly-80, 83–84 (GD), Thr-88, 90–93 (NVST), 108–116 (KHGNRSVSS), and Ser-120 contribute to the 5-phospho-alpha-D-ribose 1-diphosphate site. Residue Gly-80 coordinates anthranilate. Ser-92 contacts Mg(2+). Residue Asn-111 participates in anthranilate binding. Residue Arg-166 coordinates anthranilate. Mg(2+) is bound by residues Asp-224 and Glu-225.

The protein belongs to the anthranilate phosphoribosyltransferase family. Homodimer. Mg(2+) serves as cofactor.

The catalysed reaction is N-(5-phospho-beta-D-ribosyl)anthranilate + diphosphate = 5-phospho-alpha-D-ribose 1-diphosphate + anthranilate. The protein operates within amino-acid biosynthesis; L-tryptophan biosynthesis; L-tryptophan from chorismate: step 2/5. Catalyzes the transfer of the phosphoribosyl group of 5-phosphorylribose-1-pyrophosphate (PRPP) to anthranilate to yield N-(5'-phosphoribosyl)-anthranilate (PRA). This Sorangium cellulosum (strain So ce56) (Polyangium cellulosum (strain So ce56)) protein is Anthranilate phosphoribosyltransferase.